Consider the following 266-residue polypeptide: Phosphonates import ATP-binding protein PhnC (266 aa).

Residues 2–246 form the ABC transporter domain; that stretch reads IEIKNVSKTY…KFAEIYGRPI (245 aa). 35-42 provides a ligand contact to ATP; the sequence is GLSGAGKS.

The protein belongs to the ABC transporter superfamily. Phosphonates importer (TC 3.A.1.9.1) family. The complex is composed of two ATP-binding proteins (PhnC), two transmembrane proteins (PhnE) and a solute-binding protein (PhnD).

The protein resides in the cell membrane. The catalysed reaction is phosphonate(out) + ATP + H2O = phosphonate(in) + ADP + phosphate + H(+). Functionally, part of the ABC transporter complex PhnCDE involved in phosphonates import. Responsible for energy coupling to the transport system. The chain is Phosphonates import ATP-binding protein PhnC from Shouchella clausii (strain KSM-K16) (Alkalihalobacillus clausii).